The sequence spans 126 residues: E3 ubiquitin-protein ligase PPP1R11 (126 aa).

The interval 1-25 is disordered; the sequence is MAEAGAGLSETVTETTVTVTTEPEN. Position 2 is an N-acetylalanine (alanine 2). Residues 10 to 22 are compositionally biased toward low complexity; sequence ETVTETTVTVTTE. The segment at 52-62 is atypical RING finger domain 1; that stretch reads HMGRRSSKCCC. Residues 70–126 form a disordered region; sequence FGESSTESDEEEEEGCGHTHCVRGHRKGRRRATLGPTPTTPPQPPDPSQPPPGPMQH. A phosphoserine mark is found at serine 73 and serine 74. Threonine 75 bears the Phosphothreonine mark. Serine 77 is modified (phosphoserine). Residues 85–94 form an atypical RING finger domain 2 region; it reads CGHTHCVRGH. Residues 89 to 101 show a composition bias toward basic residues; sequence HCVRGHRKGRRRA. Positions 107 to 126 are enriched in pro residues; that stretch reads PTTPPQPPDPSQPPPGPMQH. Position 109 is a phosphothreonine (threonine 109).

As to quaternary structure, interacts with TLR2 and UBE2D2. In terms of processing, auto-ubiquitinated. As to expression, widely expressed.

It catalyses the reaction S-ubiquitinyl-[E2 ubiquitin-conjugating enzyme]-L-cysteine + [acceptor protein]-L-lysine = [E2 ubiquitin-conjugating enzyme]-L-cysteine + N(6)-ubiquitinyl-[acceptor protein]-L-lysine.. Its pathway is protein modification; protein ubiquitination. Its function is as follows. Atypical E3 ubiquitin-protein ligase which ubiquitinates TLR2 at 'Lys-754' leading to its degradation by the proteasome. Plays a role in regulating inflammatory cytokine release and gram-positive bacterial clearance by functioning, in part, through the ubiquitination and degradation of TLR2. Inhibitor of protein phosphatase 1. The polypeptide is E3 ubiquitin-protein ligase PPP1R11 (PPP1R11) (Homo sapiens (Human)).